Here is a 1627-residue protein sequence, read N- to C-terminus: Formin-like protein 5 (1627 aa).

The 190-residue stretch at 5 to 194 (RKFFLKKTPD…HYITRQGSGP (190 aa)) folds into the Phosphatase tensin-type domain. Cysteine 127 serves as the catalytic Phosphocysteine intermediate. A C2 tensin-type domain is found at 200–337 (SRPLILDSIV…FRAEVVFSDP (138 aa)). Disordered regions lie at residues 370-413 (EAEE…LEKH), 680-787 (TKRE…YDSS), 801-1181 (KFNV…RGVV), 1241-1261 (AAVPKPNDSSKSDSRRKSLGS), and 1571-1627 (KQAE…KDVG). 4 stretches are compositionally biased toward basic and acidic residues: residues 402–413 (VSREDSGSLEKH), 681–691 (KREESGGRRDV), 700–717 (IEARAKSPRISSDRRQIP), and 726–742 (MPVDHAPEAVLLEEKLG). 6 stretches are compositionally biased toward pro residues: residues 824 to 835 (APPPPPPPPPPY), 852 to 870 (QPPPPPPPPPLPPPPPPPA), 877 to 886 (IPPPPPPPPL), 897 to 908 (VPPPPPPPPPPR), 931 to 965 (ISPPPPPPPPPLKPSSGAPCPPPPPPPPPPPPPSA), and 974 to 1168 (APPP…PPGG). One can recognise an FH2 domain in the interval 1188–1588 (FGAAAARKST…RAEKEAEAEK (401 aa)). Basic and acidic residues-rich tracts occupy residues 1248–1261 (DSSKSDSRRKSLGS) and 1571–1590 (KQAELDKKRAEKEAEAEKSK). Positions 1600-1611 (KPSNPSRQVKQT) are enriched in polar residues. Over residues 1612–1627 (PDTKTRAASRRGKDVG) the composition is skewed to basic and acidic residues.

Belongs to the formin-like family. Class-II subfamily.

This Oryza sativa subsp. japonica (Rice) protein is Formin-like protein 5 (FH5).